Consider the following 398-residue polypeptide: Thyrotropin-releasing hormone receptor (398 aa).

Over 1 to 28 (MENETGSELNQTQLQPRAVVALEYQVVT) the chain is Extracellular. N-linked (GlcNAc...) asparagine glycans are attached at residues N3 and N10. The chain crosses the membrane as a helical span at residues 29–51 (ILLVLIICGLGIVGNIMVVLVVM). The Cytoplasmic portion of the chain corresponds to 52-61 (RTKHMRTPTN). A helical transmembrane segment spans residues 62 to 83 (CYLVSLAVADLMVLVAAGLPNI). The Extracellular segment spans residues 84 to 99 (TDSIYGSWVYGYVGCL). C98 and C179 are disulfide-bonded. The chain crosses the membrane as a helical span at residues 100–121 (CITYLQYLGINASSCSITAFTI). Residues 122 to 144 (ERYIAICHPIKAQFLCTFSRAKK) are Cytoplasmic-facing. The helical transmembrane segment at 145–168 (IIIFVWAFTSIYCMLWFFLLDLNI) threads the bilayer. At 169-193 (STYKDAIVVSCGYKISRNYYSPIYL) the chain is on the extracellular side. A helical membrane pass occupies residues 194 to 215 (MDFGVFYVVPMILATVLYGFIA). At 216-266 (RILFLSPIPSDPKENSNTWKNDSTHQNKNLNSKTSNRYFNSTVSSRKQVTK) the chain is on the cytoplasmic side. A helical membrane pass occupies residues 267–288 (MLAVVVILFALLWMPYRTLVVV). Residues 289–296 (NSFLSSPF) lie on the Extracellular side of the membrane. Residues 297–319 (QENWFLLFCRICIYLNSAINPVI) traverse the membrane as a helical segment. At 320 to 398 (YNLMSQKFRA…LASEVTFSQS (79 aa)) the chain is on the cytoplasmic side.

This sequence belongs to the G-protein coupled receptor 1 family.

The protein resides in the cell membrane. In terms of biological role, receptor for thyrotropin-releasing hormone (TRH). Upon ligand binding, this G-protein-coupled receptor triggers activation of the phosphatidylinositol (IP3)-calcium-protein kinase C (PKC) pathway. This chain is Thyrotropin-releasing hormone receptor (TRHR), found in Ovis aries (Sheep).